The following is a 110-amino-acid chain: Flagellar hook-basal body complex protein FliE (110 aa).

The protein belongs to the FliE family.

Its subcellular location is the bacterial flagellum basal body. The sequence is that of Flagellar hook-basal body complex protein FliE from Pseudomonas putida (strain W619).